We begin with the raw amino-acid sequence, 330 residues long: Biotin synthase 2 (330 aa).

Residues 48 to 278 (MCGDGFDMCS…QAAIRLAGGR (231 aa)) enclose the Radical SAM core domain. C66, C70, and C73 together coordinate [4Fe-4S] cluster. S111, C143, C203, and R273 together coordinate [2Fe-2S] cluster.

The protein belongs to the radical SAM superfamily. Biotin synthase family. As to quaternary structure, homodimer. [4Fe-4S] cluster serves as cofactor. It depends on [2Fe-2S] cluster as a cofactor.

The enzyme catalyses (4R,5S)-dethiobiotin + (sulfur carrier)-SH + 2 reduced [2Fe-2S]-[ferredoxin] + 2 S-adenosyl-L-methionine = (sulfur carrier)-H + biotin + 2 5'-deoxyadenosine + 2 L-methionine + 2 oxidized [2Fe-2S]-[ferredoxin]. It functions in the pathway cofactor biosynthesis; biotin biosynthesis; biotin from 7,8-diaminononanoate: step 2/2. Functionally, catalyzes the conversion of dethiobiotin (DTB) to biotin by the insertion of a sulfur atom into dethiobiotin via a radical-based mechanism. This chain is Biotin synthase 2, found in Corynebacterium diphtheriae (strain ATCC 700971 / NCTC 13129 / Biotype gravis).